A 561-amino-acid polypeptide reads, in one-letter code: Urocanate hydratase (561 aa).

NAD(+) is bound by residues 52–53 (GG), Gln-130, 176–178 (GMG), Glu-196, Arg-201, 242–243 (NA), 263–267 (QTSAH), 273–274 (YL), and Tyr-322. The active site involves Cys-410. Position 492 (Gly-492) interacts with NAD(+).

This sequence belongs to the urocanase family. Requires NAD(+) as cofactor.

It localises to the cytoplasm. The catalysed reaction is 4-imidazolone-5-propanoate = trans-urocanate + H2O. It participates in amino-acid degradation; L-histidine degradation into L-glutamate; N-formimidoyl-L-glutamate from L-histidine: step 2/3. Functionally, catalyzes the conversion of urocanate to 4-imidazolone-5-propionate. This is Urocanate hydratase from Salmonella arizonae (strain ATCC BAA-731 / CDC346-86 / RSK2980).